An 89-amino-acid polypeptide reads, in one-letter code: Small ribosomal subunit protein uS15 (89 aa).

The span at 1 to 21 shows a compositional bias: basic and acidic residues; that stretch reads MALSKEQKTETLKEFGLHETD. The interval 1-22 is disordered; that stretch reads MALSKEQKTETLKEFGLHETDT.

The protein belongs to the universal ribosomal protein uS15 family. As to quaternary structure, part of the 30S ribosomal subunit. Forms a bridge to the 50S subunit in the 70S ribosome, contacting the 23S rRNA.

One of the primary rRNA binding proteins, it binds directly to 16S rRNA where it helps nucleate assembly of the platform of the 30S subunit by binding and bridging several RNA helices of the 16S rRNA. In terms of biological role, forms an intersubunit bridge (bridge B4) with the 23S rRNA of the 50S subunit in the ribosome. The chain is Small ribosomal subunit protein uS15 from Corynebacterium jeikeium (strain K411).